The sequence spans 377 residues: Nitric oxide reductase FlRd-NAD(+) reductase (377 aa).

The protein belongs to the FAD-dependent oxidoreductase family. Requires FAD as cofactor.

Its subcellular location is the cytoplasm. The enzyme catalyses 2 reduced [nitric oxide reductase rubredoxin domain] + NAD(+) + H(+) = 2 oxidized [nitric oxide reductase rubredoxin domain] + NADH. The protein operates within nitrogen metabolism; nitric oxide reduction. One of at least two accessory proteins for anaerobic nitric oxide (NO) reductase. Reduces the rubredoxin moiety of NO reductase. The chain is Nitric oxide reductase FlRd-NAD(+) reductase from Salmonella typhimurium (strain LT2 / SGSC1412 / ATCC 700720).